The following is a 429-amino-acid chain: Intraflagellar transport protein 57 homolog (429 aa).

Positions 304–369 (EKYINNQLEN…MEEKGSSMTD (66 aa)) form a coiled coil. A pDED region spans residues 335–426 (GNGGVTERTR…HATVIPEPAT (92 aa)).

This sequence belongs to the IFT57 family. Component of the IFT complex B, at least composed of IFT20, IFT22, IFT25, IFT27, IFT46, IFT52, TRAF3IP1/IFT54, IFT57, IFT74, IFT80, IFT81, and IFT88. Interacts with IFT20. Interacts with IFT88. Interacts with IFT80, IFT-81, IFT74, IFT172, IFT70B and KIF17. Interacts with BLOC1S2. Interacts with RYBP. Interacts with HOMER1; the interaction possibly prevents the pro-apoptotic effects of IFT57. Interacts with HIP1. In normal conditions, it poorly interacts with HIP1, HIP1 being strongly associated with HTT. However, in mutant HTT proteins with a long poly-Gln region, interaction between HTT and HIP1 is inhibited, promoting the interaction between HIP1 and IFT57, leading to apoptosis. Interacts with BFAR. Interacts with TTC25. Interacts with USH1G. Interacts with chicken anemia virus protein apoptin. As to expression, present in many tissues such as brain, thymus, lymph node, lung, liver, skin and kidney (at protein level).

It is found in the cell projection. It localises to the cilium. The protein resides in the cytoplasm. Its subcellular location is the cytoskeleton. The protein localises to the cilium basal body. In terms of biological role, required for the formation of cilia. Plays an indirect role in sonic hedgehog signaling, cilia being required for all activity of the hedgehog pathway. Has pro-apoptotic function via its interaction with HIP1, leading to recruit caspase-8 (CASP8) and trigger apoptosis. Has the ability to bind DNA sequence motif 5'-AAAGACATG-3' present in the promoter of caspase genes such as CASP1, CASP8 and CASP10, suggesting that it may act as a transcription regulator; however the relevance of such function remains unclear. The chain is Intraflagellar transport protein 57 homolog (IFT57) from Homo sapiens (Human).